The primary structure comprises 468 residues: Spliceosome-associated protein CWC27 homolog (468 aa).

Ser-2 carries the N-acetylserine modification. In terms of domain architecture, PPIase cyclophilin-type spans 11 to 166; the sequence is TNGKVLLKTT…NPHRIKSCEV (156 aa). Disordered stretches follow at residues 204 to 382 and 427 to 468; these read LLSF…EDQT and RKVK…KERR. Residues 206–229 are a coiled coil; the sequence is SFGEEAEEEEEEVNRVSQSMKGRS. Positions 231–241 are enriched in basic and acidic residues; it reads SSHDLLKDDPH. Positions 256 to 268 are enriched in acidic residues; that stretch reads TGDLEDDAEDDSV. Basic and acidic residues-rich tracts occupy residues 269-287 and 302-342; these read EHDG…ERIA and GDGE…AEKG. A Phosphoserine modification is found at Ser-273. Residues 309–342 are a coiled coil; the sequence is ASRSEELRKEARQLKRELLAAKQKKESATKAEKG. Ser-343 carries the post-translational modification Phosphoserine. Composition is skewed to basic and acidic residues over residues 356–368 and 453–468; these read EYRR…EALR and RREE…KERR.

The protein belongs to the cyclophilin-type PPIase family. Part of the activated spliceosome B/catalytic step 1 spliceosome, one of the forms of the spliceosome which has a well-formed active site but still cannot catalyze the branching reaction and is composed at least of 52 proteins, the U2, U5 and U6 snRNAs and the pre-mRNA. Recruited during early steps of activated spliceosome B maturation, it is probably one of the first proteins released from this complex as he matures to the spliceosome C complex. Component of the minor spliceosome, which splices U12-type introns.

The protein resides in the nucleus. In terms of biological role, as part of the spliceosome, plays a role in pre-mRNA splicing. Probable inactive PPIase with no peptidyl-prolyl cis-trans isomerase activity. As a component of the minor spliceosome, involved in the splicing of U12-type introns in pre-mRNAs. This chain is Spliceosome-associated protein CWC27 homolog, found in Rattus norvegicus (Rat).